Here is a 4262-residue protein sequence, read N- to C-terminus: Polyketide synthase PksM (4262 aa).

Residues 1–114 form an N-terminal hotdog fold 1 region; the sequence is MITEQLHISL…ADMHRKEQTA (114 aa). A PKS/mFAS DH 1 domain is found at 1–271; the sequence is MITEQLHISL…GKSVRNMSAF (271 aa). Catalysis depends on H18, which acts as the Proton acceptor; for dehydratase activity 1. A C-terminal hotdog fold 1 region spans residues 129–271; the sequence is DRILNLDEIY…GKSVRNMSAF (143 aa). Catalysis depends on D190, which acts as the Proton donor; for dehydratase activity 1. A Carrier 1 domain is found at 293 to 367; it reads PAFEMYLRQL…ELAAHLADHY (75 aa). O-(pantetheine 4'-phosphoryl)serine is present on S327. A Ketosynthase family 3 (KS3) 1 domain is found at 393-831; it reads GEDIAIIGMA…GSNAHLILEE (439 aa). Catalysis depends on for beta-ketoacyl synthase 1 activity residues C569, H704, and H744. An N-terminal hotdog fold 2 region spans residues 1009–1135; sequence HPLVHRNTSD…GRAVISDEAE (127 aa). A PKS/mFAS DH 2 domain is found at 1009–1301; that stretch reads HPLVHRNTSD…MRALDGEQHS (293 aa). Residue H1038 is the Proton acceptor; for dehydratase activity 2 of the active site. The interval 1149 to 1301 is C-terminal hotdog fold 2; it reads SLDTVTSEQC…MRALDGEQHS (153 aa). The Proton donor; for dehydratase activity 2 role is filled by D1211. The Carrier 2 domain maps to 2188–2261; the sequence is EKSTEYMKKL…ALVEHFIKTK (74 aa). S2222 carries the O-(pantetheine 4'-phosphoryl)serine modification. The segment covering 2275-2291 has biased composition (polar residues); that stretch reads VQQHTPAESRTQSSQKP. Residues 2275–2313 are disordered; that stretch reads VQQHTPAESRTQSSQKPDQAAKRTRRFRKLGFSGEKETP. The 416-residue stretch at 2319-2734 folds into the Ketosynthase family 3 (KS3) 2 domain; sequence SRDVAVIGIS…GSNAHIILEE (416 aa). Residues C2476, H2611, and H2651 each act as for beta-ketoacyl synthase 2 activity in the active site. Positions 2750-2826 form a coiled coil; that stretch reads ALIVLSAKNM…DFIENKADSL (77 aa). Residues 3409 to 3486 form the Carrier 3 domain; that stretch reads SIEKRLEHDL…ELISFFLTDH (78 aa). Position 3446 is an O-(pantetheine 4'-phosphoryl)serine (S3446). Positions 3529–3944 constitute a Ketosynthase family 3 (KS3) 3 domain; the sequence is DEPIAIIGMS…GTNAHAVIEE (416 aa). Catalysis depends on for beta-ketoacyl synthase 3 activity residues C3690, H3825, and H3865. Residues 4004 to 4033 are a coiled coil; that stretch reads KAMEARLAIVANNQEQLVRKLKEYVEAMKN. One can recognise a Carrier 4 domain in the interval 4135 to 4212; it reads NGKTHIQKII…ALSDHLALKA (78 aa). S4172 carries the O-(pantetheine 4'-phosphoryl)serine modification.

Pantetheine 4'-phosphate is required as a cofactor.

The protein localises to the cytoplasm. The protein operates within antibiotic biosynthesis; bacillaene biosynthesis. Involved in some intermediate steps for the synthesis of the antibiotic polyketide bacillaene which is involved in secondary metabolism. The chain is Polyketide synthase PksM (pksM) from Bacillus subtilis (strain 168).